Consider the following 819-residue polypeptide: Meiotically up-regulated gene 45 protein (819 aa).

Residues 797–817 traverse the membrane as a helical segment; that stretch reads AMCLLTLLIGIYLILQVVFIY.

Its subcellular location is the membrane. In terms of biological role, has a role in meiosis. The protein is Meiotically up-regulated gene 45 protein (mug45) of Schizosaccharomyces pombe (strain 972 / ATCC 24843) (Fission yeast).